The chain runs to 152 residues: Putative aryl-alcohol dehydrogenase YFL057C (152 aa).

It belongs to the aldo/keto reductase family. Aldo/keto reductase 2 subfamily.

Functionally, putative aryl-alcohol dehydrogenase. The chain is Putative aryl-alcohol dehydrogenase YFL057C from Saccharomyces cerevisiae (strain ATCC 204508 / S288c) (Baker's yeast).